A 272-amino-acid chain; its full sequence is Eukaryotic translation initiation factor 3 subunit G (272 aa).

2 disordered regions span residues 1-28 (MPALDEIKSSWADEVELDSGSLPPPTEI) and 157-188 (APTTAKSGKYVPPSMRDSQKPGMGGNPRGRDD). Residues 190–268 (TAIRISNLSE…LILNVEWSKP (79 aa)) enclose the RRM domain.

The protein belongs to the eIF-3 subunit G family. As to quaternary structure, component of the eukaryotic translation initiation factor 3 (eIF-3) complex.

It localises to the cytoplasm. In terms of biological role, RNA-binding component of the eukaryotic translation initiation factor 3 (eIF-3) complex, which is involved in protein synthesis of a specialized repertoire of mRNAs and, together with other initiation factors, stimulates binding of mRNA and methionyl-tRNAi to the 40S ribosome. The eIF-3 complex specifically targets and initiates translation of a subset of mRNAs involved in cell proliferation. This subunit can bind 18S rRNA. The sequence is that of Eukaryotic translation initiation factor 3 subunit G from Aedes aegypti (Yellowfever mosquito).